The following is a 138-amino-acid chain: Putative pre-16S rRNA nuclease (138 aa).

This sequence belongs to the YqgF nuclease family.

It localises to the cytoplasm. Its function is as follows. Could be a nuclease involved in processing of the 5'-end of pre-16S rRNA. In Cronobacter sakazakii (strain ATCC BAA-894) (Enterobacter sakazakii), this protein is Putative pre-16S rRNA nuclease.